Reading from the N-terminus, the 311-residue chain is Ribosomal RNA small subunit methyltransferase H (311 aa).

S-adenosyl-L-methionine is bound by residues 33–35, D53, F77, D98, and Q105; that span reads GGH.

Belongs to the methyltransferase superfamily. RsmH family.

The protein resides in the cytoplasm. It catalyses the reaction cytidine(1402) in 16S rRNA + S-adenosyl-L-methionine = N(4)-methylcytidine(1402) in 16S rRNA + S-adenosyl-L-homocysteine + H(+). Specifically methylates the N4 position of cytidine in position 1402 (C1402) of 16S rRNA. This Thiobacillus denitrificans (strain ATCC 25259 / T1) protein is Ribosomal RNA small subunit methyltransferase H.